Here is a 259-residue protein sequence, read N- to C-terminus: MAPVKRRVFKTNNEMAVELAKYTADLSSKFCKERGVFTVVLSGGDLIAWLWKLLEAPYIDSIEWSKWHIFWVDERVCAWDHADSNYKLAYDGFLSKVPVPAENIYAIDNGLGAEGNAELAAERYEECLKQKVNQNIIRTYKSSGFPQFDLQLLGMGPDGHMASLFPGHAQINEKVKWVTSITDSPKPPSKRITLTLPVINCASYNVMAVCDKEQADSVAAALNHTKDLPAGRLTADVEVVWFLDQAAASKLPHGWCSIL.

It belongs to the glucosamine/galactosamine-6-phosphate isomerase family. 6-phosphogluconolactonase subfamily.

The protein resides in the cytoplasm. The protein localises to the cytosol. It carries out the reaction 6-phospho-D-glucono-1,5-lactone + H2O = 6-phospho-D-gluconate + H(+). It participates in carbohydrate degradation; pentose phosphate pathway; D-ribulose 5-phosphate from D-glucose 6-phosphate (oxidative stage): step 2/3. Functionally, catalyzes the hydrolysis of 6-phosphogluconolactone to 6-phosphogluconate. The protein is Probable 6-phosphogluconolactonase 2 of Arabidopsis thaliana (Mouse-ear cress).